The primary structure comprises 174 residues: MKSALAALRAVAAAVVLIVSVPAWADFRGEVVRILDGDTIDVLVNRQTIRVRLADIDAPESGQAFGSRARQRLADLTFRQEVQVTEKEVDRYGRTLGVVYAPLQYPGGQTQLTNINAIMVQEGMAWAYRYYGKPTDAQMYEYEKEARRQRLGLWSDPNAQEPWKWRRASKNATN.

A signal peptide spans 1–23; sequence MKSALAALRAVAAAVVLIVSVPA. Active-site residues include Arg52, Glu60, and Arg94.

This sequence belongs to the thermonuclease family.

The enzyme catalyses Endonucleolytic cleavage to nucleoside 3'-phosphates and 3'-phosphooligonucleotide end-products.. In Shigella flexneri, this protein is Micrococcal nuclease (nuc).